Reading from the N-terminus, the 267-residue chain is Cilia- and flagella-associated protein 300 (267 aa).

This sequence belongs to the CFAP300 family. As to quaternary structure, interacts with DNAAF2. Expressed in the left-right organiser (LRO) node at 8.25 dpc.

It localises to the cytoplasm. The protein localises to the cytoskeleton. Its subcellular location is the cilium axoneme. Functionally, cilium- and flagellum-specific protein that plays a role in axonemal structure organization and motility. May play a role in outer and inner dynein arm assembly. The polypeptide is Cilia- and flagella-associated protein 300 (Mus musculus (Mouse)).